Consider the following 467-residue polypeptide: Regulatory protein NPR6 (467 aa).

Positions 27–111 (SDVTFSVEGR…LYSGQVSIVP (85 aa)) constitute a BTB domain. A C2HC NPR-type zinc finger spans residues 117–131 (RSNCGDRGCWHTHCT). Residues cysteine 120, cysteine 125, histidine 127, and cysteine 130 each coordinate Zn(2+). ANK repeat units lie at residues 247–276 (QKIRRMRRALDSSDVELVKLMVMGEGLNLD), 277–306 (ESLALIYAVENCSREVVKALLELGAADVNY), 311–340 (TGKTALHIAAEMVSPDMVAVLLDHHADPNV), and 344–378 (DGITPLDILRTLTSDFLFKGAIPGLTHIEPNKLRL). A disordered region spans residues 434–467 (RDIGDDNSNQREGMNLHHHHHDPSTMYHHHHHHF). Positions 449-467 (LHHHHHDPSTMYHHHHHHF) are enriched in basic residues.

This sequence belongs to the plant 'ANKYRIN-BTB/POZ' family. 'NOOT-BOP-COCH-like' (NBCL) subfamily. As to quaternary structure, homodimer or heterodimer with BOP2. Interacts with PAN.

The protein localises to the cytoplasm. Its subcellular location is the nucleus. Its pathway is protein modification; protein ubiquitination. In terms of biological role, may act as a substrate-specific adapter of an E3 ubiquitin-protein ligase complex (CUL3-RBX1-BTB) which mediates the ubiquitination and subsequent proteasomal degradation of target proteins. Acts redundantly with BOP2. BOP1/2 promote leaf and floral meristem fate and determinacy in a pathway targeting AP1 and AGL24. BOP1/2 act as transcriptional co-regulators through direct interaction with TGA factors, including PAN, a direct regulator of AP1. Controls lateral organ fate through positive regulation of adaxial-abaxial polarity genes ATHB-14/PHB, YAB1/FIL and YAB3, and through positive regulation of LOB domain-containing genes LOB, LBD6/AS2 and LBD36. Promotes and maintains a developmentally determinate state in leaf cells through the negative regulation of JAG, JGL and class I KNOX genes. Is also involved in nectary development, formation of normal abscission zones (AZs) and suppression of bract formation, probably by regulating the cell wall disorganization. The sequence is that of Regulatory protein NPR6 from Arabidopsis thaliana (Mouse-ear cress).